A 360-amino-acid chain; its full sequence is Inward rectifier potassium channel 13 (360 aa).

Residues 1–50 (MDSSNCKVIAPLLSQRYRRMVTKDGHSTLQMDGAQRGLAYLRDAWGILMD) lie on the Cytoplasmic side of the membrane. Residues 51–77 (MRWRWMMLVFSASFVVHWLVFAVLWYV) form a helical membrane-spanning segment. Residues 78–105 (LAEMNGDLELDHDAPPENHTICVKYITS) are Extracellular-facing. An intramembrane region (helical; Pore-forming) is located at residues 106–122 (FTAAFSFSLETQLTIGY). The short motif at 119 to 124 (TIGYGT) is the Selectivity filter element. At 123–131 (GTMFPSGDC) the chain is on the extracellular side. A helical transmembrane segment spans residues 132 to 157 (PSAIALLAIQMLLGLMLEAFITGAFV). Residues 158 to 360 (AKIARPKNRA…FQISETGLTE (203 aa)) are Cytoplasmic-facing. Ser-201 is modified (phosphoserine; by PKC). Phosphoserine; by PKA is present on Ser-287.

Belongs to the inward rectifier-type potassium channel (TC 1.A.2.1) family. KCNJ13 subfamily. As to quaternary structure, homotetramer. Interacts with RAB28; the interaction may facilitate cone outer segments phagocytosis. Post-translationally, phosphorylation at Ser-201 by PKC strongly inhibits ionic currents, while phosphorylation at Ser-287 by PKA increases them. As to expression, predominantly expressed in small intestine. Expression is also detected in stomach, kidney, and all central nervous system regions tested with the exception of spinal cord.

Its subcellular location is the membrane. It localises to the cell membrane. It catalyses the reaction K(+)(in) = K(+)(out). With respect to regulation, inhibited by Ba(2+) and Cs(+), although sensitivity to those inhibitors is much lower than in other Kir channels. In terms of biological role, inward rectifier potassium channels are characterized by a greater tendency to allow potassium to flow into the cell rather than out of it. Their voltage dependence is regulated by the concentration of extracellular potassium; as external potassium is raised, the voltage range of the channel opening shifts to more positive voltages. The inward rectification is mainly due to the blockage of outward current by internal magnesium. KCNJ13 has a very low single channel conductance, low sensitivity to block by external barium and cesium, and no dependence of its inward rectification properties on the internal blocking particle magnesium. The protein is Inward rectifier potassium channel 13 (KCNJ13) of Homo sapiens (Human).